Here is a 115-residue protein sequence, read N- to C-terminus: Basic leucine zipper transcriptional factor ATF-like (115 aa).

A disordered region spans residues 1–60 (MQQESDRNEQGYSSSPPSSNKQDSSDDTKKNHRREKNRIAAQKSRQRQTEKADSLHIESE). Low complexity predominate over residues 13 to 22 (SSSPPSSNKQ). The bZIP domain maps to 27–90 (DTKKNHRREK…KYLTCVLSTH (64 aa)). The tract at residues 29 to 51 (KKNHRREKNRIAAQKSRQRQTEK) is basic motif. Over residues 47-60 (RQTEKADSLHIESE) the composition is skewed to basic and acidic residues. A leucine-zipper region spans residues 55-83 (LHIESENLERLNSALRGEISGLREELKYL).

This sequence belongs to the bZIP family.

It localises to the nucleus. Its subcellular location is the cytoplasm. In terms of biological role, AP-1 family transcription factor that controls the differentiation of lineage-specific cells in the immune system: specifically mediates the differentiation of T-helper 17 cells (Th17), follicular T-helper cells (TfH), CD8(+) dendritic cells and class-switch recombination (CSR) in B-cells. The polypeptide is Basic leucine zipper transcriptional factor ATF-like (batf) (Xenopus laevis (African clawed frog)).